The chain runs to 431 residues: Protein translocase subunit SecY (431 aa).

Transmembrane regions (helical) follow at residues 18–38 (IIFT…PVPH), 64–84 (LFNF…SIII), 116–136 (FTIV…NNMA), 146–166 (VGTY…LMWL), 175–195 (VGNG…PQTI), 214–234 (IIKV…VIFI), 262–282 (LPLK…AFIT), 309–329 (PVGM…YAFV), 369–389 (FVGS…VNIA), and 390–410 (GLPS…GVAL).

This sequence belongs to the SecY/SEC61-alpha family. As to quaternary structure, component of the Sec protein translocase complex. Heterotrimer consisting of SecY, SecE and SecG subunits. The heterotrimers can form oligomers, although 1 heterotrimer is thought to be able to translocate proteins. Interacts with the ribosome. Interacts with SecDF, and other proteins may be involved. Interacts with SecA.

The protein localises to the cell membrane. In terms of biological role, the central subunit of the protein translocation channel SecYEG. Consists of two halves formed by TMs 1-5 and 6-10. These two domains form a lateral gate at the front which open onto the bilayer between TMs 2 and 7, and are clamped together by SecE at the back. The channel is closed by both a pore ring composed of hydrophobic SecY resides and a short helix (helix 2A) on the extracellular side of the membrane which forms a plug. The plug probably moves laterally to allow the channel to open. The ring and the pore may move independently. This is Protein translocase subunit SecY from Bacillus licheniformis (strain ATCC 14580 / DSM 13 / JCM 2505 / CCUG 7422 / NBRC 12200 / NCIMB 9375 / NCTC 10341 / NRRL NRS-1264 / Gibson 46).